A 128-amino-acid polypeptide reads, in one-letter code: Probable 4-amino-4-deoxy-L-arabinose-phosphoundecaprenol flippase subunit ArnF (128 aa).

A helical transmembrane segment spans residues 1–21 (MGLMWGLFSVIIASAAQLSLG). The Periplasmic segment spans residues 22 to 35 (YAASHLPPMTQFWD). A helical transmembrane segment spans residues 36-56 (FIAAFFAFGPGARMLVVGLVG). The Cytoplasmic portion of the chain corresponds to 57 to 76 (YLLSVFCWYKALHQLALSKA). The helical transmembrane segment at 77–97 (YALLSMSYVLVWIASMVLPGW) threads the bilayer. At 98–100 (EGT) the chain is on the periplasmic side. The chain crosses the membrane as a helical span at residues 101–121 (FSLKALLGVACIMSGLMLIFL). Residues 122 to 128 (PTTKQRY) lie on the Cytoplasmic side of the membrane.

It belongs to the ArnF family. In terms of assembly, heterodimer of ArnE and ArnF.

Its subcellular location is the cell inner membrane. It participates in bacterial outer membrane biogenesis; lipopolysaccharide biosynthesis. Translocates 4-amino-4-deoxy-L-arabinose-phosphoundecaprenol (alpha-L-Ara4N-phosphoundecaprenol) from the cytoplasmic to the periplasmic side of the inner membrane. The sequence is that of Probable 4-amino-4-deoxy-L-arabinose-phosphoundecaprenol flippase subunit ArnF from Escherichia fergusonii (strain ATCC 35469 / DSM 13698 / CCUG 18766 / IAM 14443 / JCM 21226 / LMG 7866 / NBRC 102419 / NCTC 12128 / CDC 0568-73).